The following is a 979-amino-acid chain: Protocadherin alpha-9 (979 aa).

The signal sequence occupies residues 1-59 (MRLGNRPEDIRTCVHLRWHIHGLLRQENASVVISKCLRHGAWRLLLWLLLLATWDVGSG). The Extracellular portion of the chain corresponds to 60-726 (QLHYSVPEEA…RREASLMDVN (667 aa)). Cadherin domains lie at 64–163 (SVPE…PPIF), 164–272 (SVAE…APVF), 273–380 (DRSV…APEI), 381–485 (VLTS…APAF), 486–595 (AHPE…PPTL), and 611–707 (VSRS…VPKA). Asn-287 and Asn-295 each carry an N-linked (GlcNAc...) asparagine glycan. Asn-578 carries an N-linked (GlcNAc...) asparagine glycan. A helical transmembrane segment spans residues 727–747 (VYLIIAICAVSSLLVLTLLLY). Topologically, residues 748–979 (TALRCSAVPM…GNSTTDNSDQ (232 aa)) are cytoplasmic. PXXP repeat units follow at residues 763-766 (LGKP), 828-831 (PRQP), 861-864 (PGGP), 902-905 (PGNP), and 920-923 (PGSP). Positions 763-923 (LGKPTLVCSS…PDKFIIPGSP (161 aa)) are 5 X 4 AA repeats of P-X-X-P. The interval 859 to 979 (AGPGGPDQQW…GNSTTDNSDQ (121 aa)) is disordered. Residues 938–952 (DKSDFITFGKKEETK) are compositionally biased toward basic and acidic residues.

Its subcellular location is the cell membrane. In terms of biological role, potential calcium-dependent cell-adhesion protein. May be involved in the establishment and maintenance of specific neuronal connections in the brain. This Mus musculus (Mouse) protein is Protocadherin alpha-9.